Consider the following 384-residue polypeptide: F-box protein At2g07140 (384 aa).

Positions 1-46 (MTLPELPKDLVEEILSFVPATSLKRLRSTCKGWNRLFKDDKRFTRI) constitute an F-box domain.

This chain is F-box protein At2g07140, found in Arabidopsis thaliana (Mouse-ear cress).